The following is a 255-amino-acid chain: Putative F-box protein L126 (255 aa).

Positions 1–46 (MLPEEILFMVFSFLDVKELIACSHACSHACSQWRRICSDKLLWVQK) constitute an F-box domain.

The chain is Putative F-box protein L126 from Acanthamoeba polyphaga (Amoeba).